Reading from the N-terminus, the 124-residue chain is Large ribosomal subunit protein uL18 (124 aa).

Belongs to the universal ribosomal protein uL18 family. In terms of assembly, part of the 50S ribosomal subunit; part of the 5S rRNA/L5/L18/L25 subcomplex. Contacts the 5S and 23S rRNAs.

In terms of biological role, this is one of the proteins that bind and probably mediate the attachment of the 5S RNA into the large ribosomal subunit, where it forms part of the central protuberance. The protein is Large ribosomal subunit protein uL18 of Parafrankia sp. (strain EAN1pec).